A 189-amino-acid chain; its full sequence is Thymidine kinase (189 aa).

Residues 9-16 (GTMNSGKS) and 85-88 (DEAQ) contribute to the ATP site. Glutamate 86 acts as the Proton acceptor in catalysis. 4 residues coordinate Zn(2+): cysteine 143, cysteine 146, cysteine 180, and histidine 183.

This sequence belongs to the thymidine kinase family. In terms of assembly, homotetramer.

It is found in the cytoplasm. It carries out the reaction thymidine + ATP = dTMP + ADP + H(+). The chain is Thymidine kinase from Lactococcus lactis subsp. lactis (strain IL1403) (Streptococcus lactis).